A 77-amino-acid chain; its full sequence is Small ribosomal subunit protein bS18 (77 aa).

Belongs to the bacterial ribosomal protein bS18 family. As to quaternary structure, part of the 30S ribosomal subunit. Forms a tight heterodimer with protein bS6.

Binds as a heterodimer with protein bS6 to the central domain of the 16S rRNA, where it helps stabilize the platform of the 30S subunit. The polypeptide is Small ribosomal subunit protein bS18 (Halalkalibacterium halodurans (strain ATCC BAA-125 / DSM 18197 / FERM 7344 / JCM 9153 / C-125) (Bacillus halodurans)).